The chain runs to 406 residues: Tryptophan synthase beta chain (406 aa).

Residue Lys99 is modified to N6-(pyridoxal phosphate)lysine.

The protein belongs to the TrpB family. As to quaternary structure, tetramer of two alpha and two beta chains. It depends on pyridoxal 5'-phosphate as a cofactor.

The enzyme catalyses (1S,2R)-1-C-(indol-3-yl)glycerol 3-phosphate + L-serine = D-glyceraldehyde 3-phosphate + L-tryptophan + H2O. It participates in amino-acid biosynthesis; L-tryptophan biosynthesis; L-tryptophan from chorismate: step 5/5. In terms of biological role, the beta subunit is responsible for the synthesis of L-tryptophan from indole and L-serine. The polypeptide is Tryptophan synthase beta chain (Brucella melitensis biotype 2 (strain ATCC 23457)).